Here is a 328-residue protein sequence, read N- to C-terminus: Ferredoxin--NADP reductase 2 (328 aa).

Residues threonine 16, glutamate 35, glutamine 43, tyrosine 48, isoleucine 88, phenylalanine 123, aspartate 284, and threonine 325 each coordinate FAD.

This sequence belongs to the ferredoxin--NADP reductase type 2 family. As to quaternary structure, homodimer. FAD is required as a cofactor.

It catalyses the reaction 2 reduced [2Fe-2S]-[ferredoxin] + NADP(+) + H(+) = 2 oxidized [2Fe-2S]-[ferredoxin] + NADPH. This chain is Ferredoxin--NADP reductase 2, found in Oceanobacillus iheyensis (strain DSM 14371 / CIP 107618 / JCM 11309 / KCTC 3954 / HTE831).